The following is a 406-amino-acid chain: O-succinylhomoserine sulfhydrylase (406 aa).

Residue Lys-219 is modified to N6-(pyridoxal phosphate)lysine.

The protein belongs to the trans-sulfuration enzymes family. MetZ subfamily. As to quaternary structure, homotetramer. It depends on pyridoxal 5'-phosphate as a cofactor.

The enzyme catalyses O-succinyl-L-homoserine + hydrogen sulfide = L-homocysteine + succinate. It participates in amino-acid biosynthesis; L-methionine biosynthesis via de novo pathway; L-homocysteine from O-succinyl-L-homoserine: step 1/1. In terms of biological role, catalyzes the formation of L-homocysteine from O-succinyl-L-homoserine (OSHS) and hydrogen sulfide. This is O-succinylhomoserine sulfhydrylase from Mycobacterium tuberculosis (strain CDC 1551 / Oshkosh).